The following is a 320-amino-acid chain: Cytochrome f (320 aa).

The first 35 residues, 1-35 (MQTRNTFSWIREEITRSISVSLMIYIITWASISSA), serve as a signal peptide directing secretion. Residues tyrosine 36, cysteine 56, cysteine 59, and histidine 60 each coordinate heme. Residues 286–305 (VQGLLFFLGSVVLAQIFLVL) traverse the membrane as a helical segment.

The protein belongs to the cytochrome f family. As to quaternary structure, the 4 large subunits of the cytochrome b6-f complex are cytochrome b6, subunit IV (17 kDa polypeptide, petD), cytochrome f and the Rieske protein, while the 4 small subunits are PetG, PetL, PetM and PetN. The complex functions as a dimer. Heme serves as cofactor. Purified from leaves as a water-soluble monomeric protein with a mass of 28.16 kDa, cleavage occurs after Gln-287 and separates the heme-binding from the membrane.

Its subcellular location is the plastid. The protein localises to the chloroplast thylakoid membrane. In terms of biological role, component of the cytochrome b6-f complex, which mediates electron transfer between photosystem II (PSII) and photosystem I (PSI), cyclic electron flow around PSI, and state transitions. In Brassica rapa subsp. rapa (Turnip), this protein is Cytochrome f (petA).